The chain runs to 594 residues: Glomulin (594 aa).

The residue at position 2 (Ala-2) is an N-acetylalanine. The tract at residues 2–553 (AVEELQSIIK…EEIPNMPPEM (552 aa)) is alpha-helical region with structural similarity to HEAT repeats. Positions 300–594 (IDQLPMVLSP…STSEENIGIK (295 aa)) are important for interaction with RBX1.

As to quaternary structure, interacts with FKBP4 and FKBP1A. Isoform 1: Interacts with RBX1 (via RING domain). Identified in complexes that contain RBX1 plus one of the cullins CUL1, CUL2, CUL3, and CUL4A. Identified in a SCF complex composed of CUL1, RBX1, SKP1, FBXW7 and GLMN. Component of a SCF-like complex consisting of CUL7, RBX1, SKP1, FBXW8 and GLMN. Interacts with unphosphorylated MET and is released upon MET phosphorylation. Phosphorylated on tyrosine residues. In terms of tissue distribution, ubiquitous.

Regulatory component of cullin-RING-based SCF (SKP1-Cullin-F-box protein) E3 ubiquitin-protein ligase complexes. Inhibits E3 ubiquitin ligase activity by binding to RBX1 (via RING domain) and inhibiting its interaction with the E2 ubiquitin-conjugating enzyme CDC34. Inhibits RBX1-mediated neddylation of CUL1. Required for normal stability and normal cellular levels of key components of SCF ubiquitin ligase complexes, including FBXW7, RBX1, CUL1, CUL2, CUL3, CUL4A, and thereby contributes to the regulation of CCNE1 and MYC levels. Essential for normal development of the vasculature. Contributes to the regulation of RPS6KB1 phosphorylation. This is Glomulin (GLMN) from Homo sapiens (Human).